We begin with the raw amino-acid sequence, 65 residues long: Large ribosomal subunit protein bL31 (65 aa).

Residues cysteine 16, cysteine 18, cysteine 36, and cysteine 39 each contribute to the Zn(2+) site.

This sequence belongs to the bacterial ribosomal protein bL31 family. Type A subfamily. As to quaternary structure, part of the 50S ribosomal subunit. Zn(2+) serves as cofactor.

Its function is as follows. Binds the 23S rRNA. The chain is Large ribosomal subunit protein bL31 from Brevibacillus brevis (strain 47 / JCM 6285 / NBRC 100599).